The primary structure comprises 514 residues: 1-pyrroline-5-carboxylate dehydrogenase (514 aa).

Catalysis depends on residues glutamate 286 and cysteine 320.

This sequence belongs to the aldehyde dehydrogenase family. RocA subfamily.

It carries out the reaction L-glutamate 5-semialdehyde + NAD(+) + H2O = L-glutamate + NADH + 2 H(+). It functions in the pathway amino-acid degradation; L-proline degradation into L-glutamate; L-glutamate from L-proline: step 2/2. The polypeptide is 1-pyrroline-5-carboxylate dehydrogenase (Staphylococcus aureus (strain MSSA476)).